The following is a 497-amino-acid chain: Probable pectinesterase 30 (497 aa).

The signal sequence occupies residues 1–21; that stretch reads MLVKVFSFFILMIIMVIGVSK. 2 N-linked (GlcNAc...) asparagine glycosylation sites follow: Asn238 and Asn254. Residue Thr263 coordinates substrate. The Proton donor role is filled by Asp316. Cys330 and Cys350 are oxidised to a cystine. Asp337 acts as the Nucleophile in catalysis. A glycan (N-linked (GlcNAc...) asparagine) is linked at Asn385. Positions 403 and 405 each coordinate substrate.

Belongs to the pectinesterase family. As to expression, expressed in siliques.

It is found in the secreted. It localises to the cell wall. It carries out the reaction [(1-&gt;4)-alpha-D-galacturonosyl methyl ester](n) + n H2O = [(1-&gt;4)-alpha-D-galacturonosyl](n) + n methanol + n H(+). Its pathway is glycan metabolism; pectin degradation; 2-dehydro-3-deoxy-D-gluconate from pectin: step 1/5. Acts in the modification of cell walls via demethylesterification of cell wall pectin. The protein is Probable pectinesterase 30 (PME30) of Arabidopsis thaliana (Mouse-ear cress).